We begin with the raw amino-acid sequence, 228 residues long: Clathrin light chain B (228 aa).

M1 carries the blocked amino end (Met) modification. Residues 1-17 (MADDFGFFSSSESGAPE) show a composition bias toward low complexity. The tract at residues 1–80 (MADDFGFFSS…VNGDVFQEAN (80 aa)) is disordered. Phosphoserine is present on residues S11 and S13. The involved in binding clathrin heavy chain stretch occupies residues 92 to 154 (ADRLTQEPES…QVEKNKINNR (63 aa)). T186 is modified (phosphothreonine). A disulfide bridge links C198 with C208. Residue K203 is modified to N6-acetyllysine. Phosphoserine is present on S216.

This sequence belongs to the clathrin light chain family. In terms of assembly, clathrin coats are formed from molecules containing 3 heavy chains and 3 light chains. Interacts (via N-terminus) with HIP1. Interacts with HIP1R.

The protein localises to the cytoplasmic vesicle membrane. Its subcellular location is the membrane. It is found in the coated pit. Clathrin is the major protein of the polyhedral coat of coated pits and vesicles. The chain is Clathrin light chain B (CLTB) from Bos taurus (Bovine).